We begin with the raw amino-acid sequence, 504 residues long: DnaJ homolog subfamily C member 3 (504 aa).

Residues 1 to 31 (MVAPGSVTSRLGSVFPFLLVLVDLQYEGAEC) form the signal peptide. TPR repeat units lie at residues 37–70 (VEKH…DPDN), 72–104 (IAYY…KMDF), 105–138 (TAAR…NPSE), 154–187 (MQRL…CVWD), 189–221 (ELRE…KNDN), 222–255 (TEAF…DQDH), 268–301 (LNKL…EPSI), 306–339 (VRSK…EPDN), and 340–373 (VNAL…NEND). C248 and C258 form a disulfide bridge. A Phosphoserine; by FAM20C modification is found at S274. A disulfide bridge links C313 with C329. The flexible linker stretch occupies residues 375–393 (QIREGLEKAQRLLKQSQKR). Positions 394–462 (DYYKILGVKR…EMRKKFDDGE (69 aa)) constitute a J domain. Residues 451–481 (DPEMRKKFDDGEDPLDAESQQGGGGNPFHRS) form a disordered region.

As to quaternary structure, interacts with EIF2AK4/GCN2; this interaction occurs under endoplasmic reticulum (ER) stress, hypothermic and amino acid starving stress conditions and inhibits EIF2AK4/GCN2 kinase activity. Interacts with EIF2AK3. Interacts with EIF2AK2. Forms a trimeric complex with DNAJB1 and HSPA8. Interacts with THAP12. Widely expressed with high level in the pancreas and testis. Also expressed in cell lines with different levels.

The protein localises to the endoplasmic reticulum. In terms of biological role, involved in the unfolded protein response (UPR) during endoplasmic reticulum (ER) stress. Acts as a negative regulator of the EIF2AK4/GCN2 kinase activity by preventing the phosphorylation of eIF-2-alpha at 'Ser-52' and hence attenuating general protein synthesis under ER stress, hypothermic and amino acid starving stress conditions. Co-chaperone of HSPA8/HSC70, it stimulates its ATPase activity. May inhibit both the autophosphorylation of EIF2AK2/PKR and the ability of EIF2AK2 to catalyze phosphorylation of the EIF2A. May inhibit EIF2AK3/PERK activity. This chain is DnaJ homolog subfamily C member 3 (DNAJC3), found in Homo sapiens (Human).